Consider the following 26-residue polypeptide: Maculatin-3.1 (26 aa).

Residue Ala26 is modified to Alanine amide.

In terms of tissue distribution, expressed by the skin dorsal glands.

Its subcellular location is the secreted. In terms of biological role, shows antibacterial activity against S.uberis. The protein is Maculatin-3.1 of Ranoidea genimaculata (Brown-spotted tree frog).